Reading from the N-terminus, the 415-residue chain is Multidrug resistance protein MdtA (415 aa).

A signal peptide spans 1–21 (MKGSYKSRWVIVIVVVIAAIA). Residues 31–46 (DSQSAAPGATKQAQQS) are compositionally biased toward polar residues. 2 disordered regions span residues 31–56 (DSQS…GMRA) and 391–415 (VEAQ…GARS). Positions 399 to 415 (PEEKATSREYAKKGARS) are enriched in basic and acidic residues.

This sequence belongs to the membrane fusion protein (MFP) (TC 8.A.1) family. Part of a tripartite efflux system composed of MdtA, MdtB and MdtC.

The protein localises to the cell inner membrane. Functionally, the MdtABC tripartite complex confers resistance against novobiocin and deoxycholate. The protein is Multidrug resistance protein MdtA of Escherichia coli O45:K1 (strain S88 / ExPEC).